We begin with the raw amino-acid sequence, 302 residues long: B3 domain-containing protein At3g17010 (302 aa).

The TF-B3 1 DNA-binding region spans 21–116 (FFKIFQRADL…VFHVNIYEQN (96 aa)). A disordered region spans residues 123–192 (PRKFQTMGPS…KVKKKSKSKS (70 aa)). Positions 135–174 (IKKEEGENSLIDVKKEEESDESPGRAEFLVRKKKTEDSKS) are enriched in basic and acidic residues. Basic residues predominate over residues 175–192 (SKKKMTRNKVKKKSKSKS). The segment at residues 199-292 (VPEFKITIRK…EFVLLTSKKN (94 aa)) is a DNA-binding region (TF-B3 2).

It is found in the nucleus. The polypeptide is B3 domain-containing protein At3g17010 (Arabidopsis thaliana (Mouse-ear cress)).